The following is a 275-amino-acid chain: Phosphate import ATP-binding protein PstB 2 (275 aa).

In terms of domain architecture, ABC transporter spans leucine 29–isoleucine 270. ATP is bound at residue glycine 61 to serine 68.

Belongs to the ABC transporter superfamily. Phosphate importer (TC 3.A.1.7) family. In terms of assembly, the complex is composed of two ATP-binding proteins (PstB), two transmembrane proteins (PstC and PstA) and a solute-binding protein (PstS).

The protein resides in the cell membrane. It catalyses the reaction phosphate(out) + ATP + H2O = ADP + 2 phosphate(in) + H(+). Part of the ABC transporter complex PstSACB involved in phosphate import. Responsible for energy coupling to the transport system. In Bacillus licheniformis (strain ATCC 14580 / DSM 13 / JCM 2505 / CCUG 7422 / NBRC 12200 / NCIMB 9375 / NCTC 10341 / NRRL NRS-1264 / Gibson 46), this protein is Phosphate import ATP-binding protein PstB 2.